A 578-amino-acid polypeptide reads, in one-letter code: Dapdiamide synthesis protein DdaD (578 aa).

Positions 498–573 constitute a Carrier domain; the sequence is ESISATEHQI…KMAAWLDASS (76 aa). The residue at position 533 (S533) is an O-(pantetheine 4'-phosphoryl)serine.

Belongs to the ATP-dependent AMP-binding enzyme family. Requires pantetheine 4'-phosphate as cofactor.

The protein operates within antibiotic biosynthesis. In terms of biological role, involved in dapdiamide antibiotics biosynthesis. Activates and sequesters N-beta-fumaramoyl-DAP as a covalently tethered thioester for subsequent oxidative modification of the fumaramoyl group. In Enterobacter agglomerans (Erwinia herbicola), this protein is Dapdiamide synthesis protein DdaD.